A 257-amino-acid polypeptide reads, in one-letter code: MAADGVDERSPLLSASHSGSVTPTAPPYLQDSSPRAELPPPYTAIVSPDASGIPVINCRVCQSLINLDGKLHQHVVKCTVCNEATPIKNPPAGKKYVRCPCNCLLICKDTSRRIGCPRPNCRRIINLGPVMLVSEEQPAQPALPVQPEGTRVVCGHCGNTFLWMELRFNTLAKCPHCKKISSVGSALPRRRCCAYITIGMMCIFIGIGLTVGTQDFARRFHATYVSWAIAYLLGLVCLIRACYWGAIRVSYPEHSFA.

Residues 1–10 (MAADGVDERS) show a composition bias toward basic and acidic residues. The tract at residues 1 to 34 (MAADGVDERSPLLSASHSGSVTPTAPPYLQDSSP) is disordered. Residues 13–23 (LSASHSGSVTP) are compositionally biased toward polar residues. The residue at position 22 (T22) is a Phosphothreonine. A Phosphoserine modification is found at S33. The active site involves C107. The CX5R motif motif lies at 107 to 113 (CKDTSRR). 2 helical membrane-spanning segments follow: residues 192–212 (CCAYITIGMMCIFIGIGLTVG) and 227–247 (WAIAYLLGLVCLIRACYWGAI).

The protein resides in the late endosome membrane. It is found in the lysosome membrane. Its subcellular location is the cytoplasmic vesicle. It localises to the phagosome membrane. The protein localises to the cell membrane. The catalysed reaction is a 1,2-diacyl-sn-glycero-3-phospho-(1D-myo-inositol-4,5-bisphosphate) + H2O = a 1,2-diacyl-sn-glycero-3-phospho-(1D-myo-inositol-5-phosphate) + phosphate. Catalyzes the hydrolysis of phosphatidylinositol-4,5-bisphosphate (PtdIns-4,5-P2) to phosphatidylinositol-4-phosphate (PtdIns-4-P). Does not hydrolyze phosphatidylinositol 3,4,5-trisphosphate, phosphatidylinositol 3,4-bisphosphate, inositol 3,5-bisphosphate, inositol 3,4-bisphosphate, phosphatidylinositol 5-monophosphate, phosphatidylinositol 4-monophosphate and phosphatidylinositol 3-monophosphate. Negatively regulates the phagocytosis of large particles by reducing phagosomal phosphatidylinositol 4,5-bisphosphate accumulation during cup formation. This Bos taurus (Bovine) protein is Type 2 phosphatidylinositol 4,5-bisphosphate 4-phosphatase.